Reading from the N-terminus, the 95-residue chain is uncharacterized protein (95 aa).

A coiled-coil region spans residues lysine 14–isoleucine 50.

This is an uncharacterized protein from Bacillus subtilis (strain 168).